Consider the following 818-residue polypeptide: Dipeptidyl-peptidase 7 (818 aa).

Residues 1–22 (MKLKRILLSVALLCGIGTTAMA) form the signal peptide. Catalysis depends on charge relay system residues H87, D223, and S645.

Belongs to the peptidase S46 family.

Functionally, catalyzes the removal of dipeptides from the N-terminus of oligopeptides. Most efficiently cleaves the synthetic substrate Met-Leu-methylcoumaryl-7-amide (Met-Leu-MCA), and slowly hydrolyzes Leu-Gln-, Lys-Ala-, Leu-Arg, and Ala-Asn-MCA. Is likely involved in amino acid metabolism and bacterial growth/survival of asaccharolytic P.endodontalis, that utilizes amino acids from extracellular proteinaceous nutrients as energy and carbon sources. In Porphyromonas endodontalis (strain ATCC 35406 / DSM 24491 / JCM 8526 / CCUG 16442 / BCRC 14492 / NCTC 13058 / HG 370) (Bacteroides endodontalis), this protein is Dipeptidyl-peptidase 7.